The primary structure comprises 245 residues: Photosystem II protein PSBS1 (245 aa).

A chloroplast-targeting transit peptide spans 1 to 25 (MAMTLSTKAFAQRGVSARKNTVRVY). The next 4 membrane-spanning stretches (helical) occupy residues 72–92 (LFVGRLAMVGFSASLIGEILT), 108–128 (GIEVDGLVIGLIAFNLIAAVL), 185–205 (LGFAFSLIGEAVTGKGALAQF), and 217–237 (EFGLVVFILFLLFAAINEGSG).

Belongs to the ELIP/psbS family.

The protein resides in the plastid. It localises to the chloroplast thylakoid membrane. Functionally, required for non-photochemical quenching (NPQ), a mechanism that converts and dissipates the harmful excess absorbed light energy into heat and protect the photosynthetic apparatus from photo-oxidative damage. Seems involved in the activation of NPQ, possibly by promoting conformational changes required for activation of LHCSR3-dependent quenching in the antenna of photosystem II (PSII). The chain is Photosystem II protein PSBS1 from Chlamydomonas reinhardtii (Chlamydomonas smithii).